A 422-amino-acid polypeptide reads, in one-letter code: Protein arginine methyltransferase NDUFAF7, mitochondrial (422 aa).

The transit peptide at 1-28 (MRTLLRLKRLMPEVLWTKRSCSSSSINK) directs the protein to the mitochondrion.

The protein belongs to the NDUFAF7 family.

It localises to the mitochondrion. It carries out the reaction L-arginyl-[protein] + 2 S-adenosyl-L-methionine = N(omega),N(omega)'-dimethyl-L-arginyl-[protein] + 2 S-adenosyl-L-homocysteine + 2 H(+). Functionally, arginine methyltransferase involved in the assembly or stability of mitochondrial NADH:ubiquinone oxidoreductase complex (complex I). Acts by mediating symmetric dimethylation of 'Arg-118' of ndufs2 after it assembles into the complex I, stabilizing the early intermediate complex. The protein is Protein arginine methyltransferase NDUFAF7, mitochondrial of Danio rerio (Zebrafish).